The following is a 361-amino-acid chain: MLLELARWLQQLESLFGLFNYLTFRGILAALTALFLSLWMGPAVIRKLAQFKGGQPIRQDGPQTHFSKAGTPTMGGSLILLTVTLSVLLWGDLRNRYVWLVLAVMICFGAIGWYDDWIKIVKRDPNGLKSRWKYLLQSIFGLAAGLFLYYTADVPAAITFYIPMFKSIALPLAGVSFVVIAYFWIVGFSNAVNLTDGLDGLAIMPTVLVACALGVFAYASGNVVFAEYLKIPLIPGAGELIIICSAIAGAGLGFLWFNTYPAMVFMGDIGALSLGAVLGTIAVIVRQEMVLVIMGGVFVIETLSVMIQVASFKLTGKRVFRMAPIHHHFELKGWPEPRVIVRFWIISVVLVLIGLATLKVR.

10 helical membrane-spanning segments follow: residues arginine 25 to isoleucine 45, threonine 73 to leucine 93, valine 98 to isoleucine 118, isoleucine 139 to threonine 159, isoleucine 168 to phenylalanine 188, glycine 200 to serine 220, alanine 237 to phenylalanine 257, valine 264 to isoleucine 284, methionine 289 to valine 309, and valine 339 to lysine 359.

It belongs to the glycosyltransferase 4 family. MraY subfamily. It depends on Mg(2+) as a cofactor.

The protein localises to the cell inner membrane. The catalysed reaction is UDP-N-acetyl-alpha-D-muramoyl-L-alanyl-gamma-D-glutamyl-meso-2,6-diaminopimeloyl-D-alanyl-D-alanine + di-trans,octa-cis-undecaprenyl phosphate = di-trans,octa-cis-undecaprenyl diphospho-N-acetyl-alpha-D-muramoyl-L-alanyl-D-glutamyl-meso-2,6-diaminopimeloyl-D-alanyl-D-alanine + UMP. It participates in cell wall biogenesis; peptidoglycan biosynthesis. Catalyzes the initial step of the lipid cycle reactions in the biosynthesis of the cell wall peptidoglycan: transfers peptidoglycan precursor phospho-MurNAc-pentapeptide from UDP-MurNAc-pentapeptide onto the lipid carrier undecaprenyl phosphate, yielding undecaprenyl-pyrophosphoryl-MurNAc-pentapeptide, known as lipid I. The sequence is that of Phospho-N-acetylmuramoyl-pentapeptide-transferase from Xanthomonas axonopodis pv. citri (strain 306).